The primary structure comprises 284 residues: ATP synthase subunit a (284 aa).

Transmembrane regions (helical) follow at residues 55–75 (AIHV…LGLF), 116–136 (IAPL…LKLI), 165–185 (FGMS…VKGV), 196–216 (PFNH…ALII), 234–254 (VVFI…NVPW), and 255–275 (AIFH…LTVV).

Belongs to the ATPase A chain family. F-type ATPases have 2 components, CF(1) - the catalytic core - and CF(0) - the membrane proton channel. CF(1) has five subunits: alpha(3), beta(3), gamma(1), delta(1), epsilon(1). CF(0) has three main subunits: a(1), b(2) and c(9-12). The alpha and beta chains form an alternating ring which encloses part of the gamma chain. CF(1) is attached to CF(0) by a central stalk formed by the gamma and epsilon chains, while a peripheral stalk is formed by the delta and b chains.

Its subcellular location is the cell inner membrane. In terms of biological role, key component of the proton channel; it plays a direct role in the translocation of protons across the membrane. This Marinobacter nauticus (strain ATCC 700491 / DSM 11845 / VT8) (Marinobacter aquaeolei) protein is ATP synthase subunit a.